Here is a 160-residue protein sequence, read N- to C-terminus: Small ribosomal subunit protein uS19v (160 aa).

This sequence belongs to the universal ribosomal protein uS19 family.

The protein localises to the cytoplasm. The protein is Small ribosomal subunit protein uS19v (RPS15F) of Arabidopsis thaliana (Mouse-ear cress).